The following is a 368-amino-acid chain: tRNA-specific 2-thiouridylase MnmA (368 aa).

Residues Gly-12–Ser-19 and Met-38 each bind ATP. The segment at Asn-98 to Asp-100 is interaction with target base in tRNA. Cys-103 acts as the Nucleophile in catalysis. The cysteines at positions 103 and 200 are disulfide-linked. Gly-128 is a binding site for ATP. Positions Lys-150 to Gln-152 are interaction with tRNA. Residue Cys-200 is the Cysteine persulfide intermediate of the active site. Residues Arg-313 to Tyr-314 are interaction with tRNA.

Belongs to the MnmA/TRMU family. Interacts with TusE.

It is found in the cytoplasm. The enzyme catalyses S-sulfanyl-L-cysteinyl-[protein] + uridine(34) in tRNA + AH2 + ATP = 2-thiouridine(34) in tRNA + L-cysteinyl-[protein] + A + AMP + diphosphate + H(+). In terms of biological role, catalyzes the 2-thiolation of uridine at the wobble position (U34) of tRNA(Lys), tRNA(Glu) and tRNA(Gln), leading to the formation of s(2)U34, the first step of tRNA-mnm(5)s(2)U34 synthesis. Sulfur is provided by IscS, via a sulfur-relay system. Binds ATP and its substrate tRNAs. This is tRNA-specific 2-thiouridylase MnmA from Pectobacterium atrosepticum (strain SCRI 1043 / ATCC BAA-672) (Erwinia carotovora subsp. atroseptica).